The chain runs to 187 residues: MSALQTSPINLDLDLAFHPANDDALTSLVDADTKRRLTHASPWQQDLTAWIESVRRDPTLTCPEIVRLSPMLSLGLQLTDDATITELNHSWRQRSESTDVLSFPALDNSLVLPTDTCVELGDIVVSVQTAQRQAKQHSHELGLELRWLVSHGLLHLLGWDHPTDQSLKTMLSYQEQLLSINGKVHHH.

Positions 151, 155, and 161 each coordinate Zn(2+).

Belongs to the endoribonuclease YbeY family. Zn(2+) is required as a cofactor.

It localises to the cytoplasm. Its function is as follows. Single strand-specific metallo-endoribonuclease involved in late-stage 70S ribosome quality control and in maturation of the 3' terminus of the 16S rRNA. The sequence is that of Endoribonuclease YbeY from Prochlorococcus marinus (strain MIT 9313).